The chain runs to 266 residues: Glutamate racemase (266 aa).

Substrate contacts are provided by residues 9–10 (DS) and 41–42 (YG). C72 serves as the catalytic Proton donor/acceptor. Position 73–74 (73–74 (NT)) interacts with substrate. The active-site Proton donor/acceptor is the C184. Residue 185–186 (TH) participates in substrate binding.

The protein belongs to the aspartate/glutamate racemases family.

It carries out the reaction L-glutamate = D-glutamate. The protein operates within cell wall biogenesis; peptidoglycan biosynthesis. Functionally, provides the (R)-glutamate required for cell wall biosynthesis. This Staphylococcus aureus (strain bovine RF122 / ET3-1) protein is Glutamate racemase.